The primary structure comprises 377 residues: MDIPPLAGKIAALSLSALPVSYALNHVSALSHPLWVALMSALILGLLFVAVYSLSHGEVSYDPLYAVFAVFAFTSVVDLIIALQEDSYVVGFMEFYTKEGEPYLRTAHGVFICYWDGTVHYLLYLAMAGAICRRKRYRNFGLYWLGSFAMSILVFLTGNILGKYSSEIRPAFFLTIPYLLVPCWAGMKVFSQPRALTRCTANMVQEEQRKGLLQRPADLALVIYLILAGFFTLFRGLVVLDCPTDACFVYIYQYEPYLRDPVAYPKVQMLMYMFYVLPFCGLAAYALTFPGCSWLPDWALVFAGGIGQAQFSHMGASMHLRTPFTYRVPEDTWGCFFVCNLLYALGPHLLAYRCLQWPAFFHQPPPSDPLALHKKQH.

The next 9 helical transmembrane spans lie at I10 to L30, L34 to L54, P63 to L83, F111 to I131, F140 to I160, P170 to F190, L219 to V239, M269 to F289, and T332 to Y352. 2 consecutive EXPERA domains span residues Y61–G186 and A217–A351.

The protein belongs to the TM6SF family. In terms of tissue distribution, substantial expression in liver and intestine, whereas all other tissues analyzed show low levels.

It localises to the endoplasmic reticulum membrane. Its subcellular location is the endoplasmic reticulum-Golgi intermediate compartment membrane. Its function is as follows. Regulator of liver fat metabolism influencing triglyceride secretion and hepatic lipid droplet content. May function as sterol isomerase. This Homo sapiens (Human) protein is Transmembrane 6 superfamily member 2 (TM6SF2).